We begin with the raw amino-acid sequence, 311 residues long: DNA-directed RNA polymerase subunit alpha (311 aa).

Residues 1 to 227 (MAQFQIECIE…NLFCSLRNLD (227 aa)) are alpha N-terminal domain (alpha-NTD). An alpha C-terminal domain (alpha-CTD) region spans residues 239–311 (DKKISQVLIE…GISLPKEKSD (73 aa)).

It belongs to the RNA polymerase alpha chain family. In terms of assembly, in plastids the minimal PEP RNA polymerase catalytic core is composed of four subunits: alpha, beta, beta', and beta''. When a (nuclear-encoded) sigma factor is associated with the core the holoenzyme is formed, which can initiate transcription.

The protein localises to the plastid. The protein resides in the chloroplast. It carries out the reaction RNA(n) + a ribonucleoside 5'-triphosphate = RNA(n+1) + diphosphate. DNA-dependent RNA polymerase catalyzes the transcription of DNA into RNA using the four ribonucleoside triphosphates as substrates. The sequence is that of DNA-directed RNA polymerase subunit alpha from Pyropia yezoensis (Susabi-nori).